Reading from the N-terminus, the 530-residue chain is Na(+)/H(+) antiporter NhaB (530 aa).

The next 10 helical transmembrane spans lie at 13 to 33 (FLGQ…LINP), 67 to 87 (PGGL…ETVL), 90 to 110 (VVGN…IYFL), 138 to 158 (AAAL…VIAV), 205 to 225 (LLMH…VGEP), 245 to 265 (MAPI…FLEF), 302 to 333 (LVIQ…VIIL), 350 to 370 (FEEA…VAVI), 449 to 469 (VATP…LAPL), and 477 to 497 (MVIM…VMTA).

Belongs to the NhaB Na(+)/H(+) (TC 2.A.34) antiporter family.

The protein resides in the cell inner membrane. It catalyses the reaction 2 Na(+)(in) + 3 H(+)(out) = 2 Na(+)(out) + 3 H(+)(in). In terms of biological role, na(+)/H(+) antiporter that extrudes sodium in exchange for external protons. This chain is Na(+)/H(+) antiporter NhaB, found in Alcanivorax borkumensis (strain ATCC 700651 / DSM 11573 / NCIMB 13689 / SK2).